The chain runs to 278 residues: Orotidine 5'-phosphate decarboxylase (278 aa).

Substrate is bound by residues D40, 65–67 (KTH), 96–105 (DRKFIDIGNT), Y230, and R248. K98 functions as the Proton donor in the catalytic mechanism.

The protein belongs to the OMP decarboxylase family.

The enzyme catalyses orotidine 5'-phosphate + H(+) = UMP + CO2. The protein operates within pyrimidine metabolism; UMP biosynthesis via de novo pathway; UMP from orotate: step 2/2. The chain is Orotidine 5'-phosphate decarboxylase (pyrG) from Penicillium chrysogenum (Penicillium notatum).